The sequence spans 277 residues: Insertion element IS407 uncharacterized 31.7 kDa protein (277 aa).

The Integrase catalytic domain occupies 103–264 (LPGAPNEVWS…APSEFAAKHR (162 aa)).

The protein is Insertion element IS407 uncharacterized 31.7 kDa protein of Burkholderia multivorans (strain ATCC 17616 / 249).